The sequence spans 864 residues: Leucine--tRNA ligase (864 aa).

A 'HIGH' region motif is present at residues 42–52 (PYPSGKLHMGH). Positions 624–628 (KMSKS) match the 'KMSKS' region motif. Residue Lys627 coordinates ATP.

Belongs to the class-I aminoacyl-tRNA synthetase family.

The protein resides in the cytoplasm. The enzyme catalyses tRNA(Leu) + L-leucine + ATP = L-leucyl-tRNA(Leu) + AMP + diphosphate. This chain is Leucine--tRNA ligase, found in Burkholderia cenocepacia (strain HI2424).